We begin with the raw amino-acid sequence, 306 residues long: uncharacterized protein (306 aa).

Residues 1 to 6 lie on the Cytoplasmic side of the membrane; that stretch reads MRFRQL. Residues 7 to 27 form a helical membrane-spanning segment; sequence LPLFGALFALYIIWGSTYFVI. An EamA 1 domain is found at 18–141; sequence IIWGSTYFVI…GLAGIIMLNS (124 aa). The Periplasmic segment spans residues 28 to 36; it reads RIGVESWPP. Residues 37–57 form a helical membrane-spanning segment; sequence LMMAGVRFLAAGILLLAFLLL. The Cytoplasmic segment spans residues 58–67; that stretch reads RGHKLPPLRP. The helical transmembrane segment at 68 to 88 threads the bilayer; sequence LLNAALIGLLLLAVGNGMVTV. Residues 89-93 lie on the Periplasmic side of the membrane; that stretch reads AEHQN. A helical transmembrane segment spans residues 94 to 114; sequence VPSGIAAVVVATVPLFTLCFS. At 115-125 the chain is on the cytoplasmic side; it reads RLFGIKTRKLE. The helical transmembrane segment at 126 to 146 threads the bilayer; sequence WVGIAIGLAGIIMLNSGGNLS. At 147 to 148 the chain is on the periplasmic side; sequence GN. Residues 149–169 form a helical membrane-spanning segment; it reads PWGAILILIGSISWAFGSVYG. Residues 160–285 enclose the EamA 2 domain; it reads ISWAFGSVYG…IVFAVVLVTL (126 aa). The Cytoplasmic segment spans residues 170 to 173; it reads SRIT. A helical membrane pass occupies residues 174 to 194; sequence LPVGMMAGAIEMLAAGVVLMI. Over 195 to 206 the chain is Periplasmic; that stretch reads ASMIAGEKLTAL. Residues 207–227 form a helical membrane-spanning segment; that stretch reads PSLSGFLAVGYLALFGSIIAI. Residues 228 to 239 are Cytoplasmic-facing; sequence NAYMYLIRNVSP. Residues 240–260 traverse the membrane as a helical segment; sequence ALATSYAYVNPVVAVLLGTGL. The Periplasmic segment spans residues 261–269; that stretch reads GGETLSKIE. The chain crosses the membrane as a helical span at residues 270–290; that stretch reads WLALGVIVFAVVLVTLGKYLF. Residues 291–306 are Cytoplasmic-facing; sequence PAKPVVAPVIQDASSE.

This sequence belongs to the EamA transporter family.

Its subcellular location is the cell inner membrane. This is an uncharacterized protein from Escherichia coli O157:H7.